The sequence spans 235 residues: Large ribosomal subunit protein uL1 (235 aa).

This sequence belongs to the universal ribosomal protein uL1 family. Part of the 50S ribosomal subunit.

Binds directly to 23S rRNA. The L1 stalk is quite mobile in the ribosome, and is involved in E site tRNA release. Functionally, protein L1 is also a translational repressor protein, it controls the translation of the L11 operon by binding to its mRNA. The polypeptide is Large ribosomal subunit protein uL1 (Synechococcus sp. (strain CC9311)).